The chain runs to 136 residues: Urease subunit beta (136 aa).

A disordered region spans residues 113–136 (NDEYAGVFGDNGAENVNKKGRKRS).

This sequence belongs to the urease beta subunit family. As to quaternary structure, heterotrimer of UreA (gamma), UreB (beta) and UreC (alpha) subunits. Three heterotrimers associate to form the active enzyme.

The protein localises to the cytoplasm. The enzyme catalyses urea + 2 H2O + H(+) = hydrogencarbonate + 2 NH4(+). The protein operates within nitrogen metabolism; urea degradation; CO(2) and NH(3) from urea (urease route): step 1/1. This chain is Urease subunit beta, found in Staphylococcus aureus (strain Newman).